We begin with the raw amino-acid sequence, 614 residues long: Glutamine--fructose-6-phosphate aminotransferase [isomerizing] (614 aa).

Cys2 functions as the Nucleophile; for GATase activity in the catalytic mechanism. The Glutamine amidotransferase type-2 domain maps to 2–221; it reads CGIVGYIGKR…DGEIAVINRG (220 aa). SIS domains are found at residues 291–430 and 463–604; these read YKEK…EKGT and LSKT…VDQP. Catalysis depends on Lys609, which acts as the For Fru-6P isomerization activity.

As to quaternary structure, homodimer.

The protein localises to the cytoplasm. It catalyses the reaction D-fructose 6-phosphate + L-glutamine = D-glucosamine 6-phosphate + L-glutamate. In terms of biological role, catalyzes the first step in hexosamine metabolism, converting fructose-6P into glucosamine-6P using glutamine as a nitrogen source. This chain is Glutamine--fructose-6-phosphate aminotransferase [isomerizing], found in Bacteroides thetaiotaomicron (strain ATCC 29148 / DSM 2079 / JCM 5827 / CCUG 10774 / NCTC 10582 / VPI-5482 / E50).